Consider the following 126-residue polypeptide: Large ribosomal subunit protein bL17 (126 aa).

The protein belongs to the bacterial ribosomal protein bL17 family. As to quaternary structure, part of the 50S ribosomal subunit. Contacts protein L32.

The polypeptide is Large ribosomal subunit protein bL17 (Xylella fastidiosa (strain M12)).